Consider the following 434-residue polypeptide: D-amino acid dehydrogenase (434 aa).

3 to 17 is a binding site for FAD; it reads VIVLGSGVIGTTTAY.

It belongs to the DadA oxidoreductase family. FAD is required as a cofactor.

The enzyme catalyses a D-alpha-amino acid + A + H2O = a 2-oxocarboxylate + AH2 + NH4(+). In terms of biological role, oxidative deamination of D-amino acids. This chain is D-amino acid dehydrogenase, found in Bordetella parapertussis (strain 12822 / ATCC BAA-587 / NCTC 13253).